A 230-amino-acid polypeptide reads, in one-letter code: Sugar fermentation stimulation protein homolog (230 aa).

This sequence belongs to the SfsA family.

The chain is Sugar fermentation stimulation protein homolog from Caldivirga maquilingensis (strain ATCC 700844 / DSM 13496 / JCM 10307 / IC-167).